Reading from the N-terminus, the 367-residue chain is ADP-ribosylhydrolase ARH3 (367 aa).

Mg(2+) is bound by residues glutamate 41, threonine 79, aspartate 80, and aspartate 81. Aspartate 80 lines the substrate pocket. Residues 149-155, histidine 185, leucine 238, and isoleucine 274 each bind substrate; that span reads KGSYGNG. Mg(2+) is bound by residues aspartate 317 and threonine 320.

Belongs to the ADP-ribosylglycohydrolase family. Monomer. The cofactor is Mg(2+).

The protein resides in the nucleus. It localises to the cytoplasm. It is found in the chromosome. The protein localises to the mitochondrion matrix. It carries out the reaction [(1''-&gt;2')-ADP-alpha-D-ribose](n) + H2O = [(1''-&gt;2')-ADP-alpha-D-ribose](n-1) + ADP-D-ribose. It catalyses the reaction 1''-O-acetyl-ADP-alpha-D-ribose + H2O = ADP-D-ribose + acetate + H(+). The catalysed reaction is O-(ADP-D-ribosyl)-L-seryl-[protein] + H2O = ADP-D-ribose + L-seryl-[protein]. The enzyme catalyses alpha-NAD(+) + H2O = ADP-D-ribose + nicotinamide + H(+). With respect to regulation, the protein undergoes a dramatic conformational switch from closed to open states upon substrate-binding, which enables specific substrate recognition for the 1''-O-linkage. The glutamate flap (Glu-41) blocks substrate entrance to Mg(2+) in the unliganded closed state. In presence of substrate, Glu-41 is ejected from the active site: this closed-to-open transition significantly widens the substrate-binding channel and precisely positions the scissile 1''-O-linkage for cleavage while securing tightly 2'- and 3'-hydroxyls of ADP-ribose. In terms of biological role, ADP-ribosylhydrolase that preferentially hydrolyzes the scissile alpha-O-linkage attached to the anomeric C1'' position of ADP-ribose and acts on different substrates, such as proteins ADP-ribosylated on serine and threonine, free poly(ADP-ribose) and O-acetyl-ADP-D-ribose. Specifically acts as a serine mono-ADP-ribosylhydrolase by mediating the removal of mono-ADP-ribose attached to serine residues on proteins, thereby playing a key role in DNA damage response. Serine ADP-ribosylation of proteins constitutes the primary form of ADP-ribosylation of proteins in response to DNA damage. Does not hydrolyze ADP-ribosyl-arginine, -cysteine, -diphthamide, or -asparagine bonds. Also able to degrade protein free poly(ADP-ribose), which is synthesized in response to DNA damage: free poly(ADP-ribose) acts as a potent cell death signal and its degradation by ADPRHL2 protects cells from poly(ADP-ribose)-dependent cell death, a process named parthanatos. Also hydrolyzes free poly(ADP-ribose) in mitochondria. Specifically digests O-acetyl-ADP-D-ribose, a product of deacetylation reactions catalyzed by sirtuins. Specifically degrades 1''-O-acetyl-ADP-D-ribose isomer, rather than 2''-O-acetyl-ADP-D-ribose or 3''-O-acetyl-ADP-D-ribose isomers. The sequence is that of ADP-ribosylhydrolase ARH3 (ADPRS) from Gallus gallus (Chicken).